A 369-amino-acid polypeptide reads, in one-letter code: Peptide chain release factor 2 (369 aa).

An N5-methylglutamine modification is found at Q251.

Belongs to the prokaryotic/mitochondrial release factor family. In terms of processing, methylated by PrmC. Methylation increases the termination efficiency of RF2.

The protein localises to the cytoplasm. In terms of biological role, peptide chain release factor 2 directs the termination of translation in response to the peptide chain termination codons UGA and UAA. This chain is Peptide chain release factor 2 (prfB), found in Thermotoga maritima (strain ATCC 43589 / DSM 3109 / JCM 10099 / NBRC 100826 / MSB8).